The following is a 324-amino-acid chain: tRNA (cytidine(32)/guanosine(34)-2'-O)-methyltransferase (324 aa).

S-adenosyl-L-methionine contacts are provided by G53, W55, D75, D91, and D116. The active-site Proton acceptor is K156. Residues 221 to 240 (DFNQLDGPTRVIVPFVACGD) form a required for binding to WDR6 region.

Belongs to the class I-like SAM-binding methyltransferase superfamily. RNA methyltransferase RlmE family. TRM7 subfamily. In terms of assembly, interacts with WDR6; the interaction is direct, and required for 2'-O-methylation of position 34 in substrate tRNAs.

The protein localises to the cytoplasm. The protein resides in the nucleus. The enzyme catalyses cytidine(32)/guanosine(34) in tRNA + 2 S-adenosyl-L-methionine = 2'-O-methylcytidine(32)/2'-O-methylguanosine(34) in tRNA + 2 S-adenosyl-L-homocysteine + 2 H(+). Its function is as follows. Methylates the 2'-O-ribose of nucleotides at positions 32 and 34 of the tRNA anticodon loop of substrate tRNAs. Requisite for faithful cytoplasmic translation. Requires THADA for methylation of the cytidine at position 32 of the anticodon loop of substrate tRNAs. Requires WDR6 for methylation of the nucleotide at position 34 of the anticodon loop of substrate tRNAs. Promotes translation efficiency of the UUU codon. Plays a role in neurogenesis. Required for expression of genes involved in neurogenesis and mitochondrial translation and energy generation. Requisite for RNA-mediated gene silencing. May modify position 32 in tRNA(Arg(ACG)), tRNA(Gln(CUG)), tRNA(Leu(UAA)), tRNA(Leu(UAG)), tRNA(Leu(AAG)), tRNA(Leu(CAG)), tRNA(Phe(GAA)), tRNA(Trp(CCA)) and tRNA(Val(AAC)), and position 34 in tRNA(Phe(GAA)), tRNA(Leu(CAA)), tRNA(Leu(UAA)), tRNA(Sec(UCA)), and tRNA(Trp(CCA)). The chain is tRNA (cytidine(32)/guanosine(34)-2'-O)-methyltransferase from Mus musculus (Mouse).